The primary structure comprises 969 residues: Probable Rho-type GTPase-activating protein 3 (969 aa).

LIM zinc-binding domains are found at residues Thr17–Cys81 and His76–Ser135. Disordered regions lie at residues Ile170 to Leu223, Ala348 to Leu459, and Thr613 to Leu646. Residues Glu193–Glu202 are compositionally biased toward polar residues. Low complexity-rich tracts occupy residues Asp212–Leu223 and Ser350–Ser361. 2 stretches are compositionally biased toward polar residues: residues Thr369–Gln392 and Leu418–Ser432. A compositionally biased stretch (basic and acidic residues) spans Ser450–Leu459. The segment covering Thr613–Asn623 has biased composition (low complexity). Over residues Pro624–Gly637 the composition is skewed to polar residues. The segment at Asp697 to Ser744 adopts a Phorbol-ester/DAG-type zinc-finger fold. Residues Arg780–Leu966 form the Rho-GAP domain.

As to quaternary structure, interacts with dil1.

It is found in the cell tip. Its function is as follows. GTPase-activating protein for Rho-type proteins. This is Probable Rho-type GTPase-activating protein 3 (rga3) from Schizosaccharomyces pombe (strain 972 / ATCC 24843) (Fission yeast).